A 692-amino-acid polypeptide reads, in one-letter code: Elongation factor G (692 aa).

In terms of domain architecture, tr-type G spans Glu8–Val282. GTP contacts are provided by residues Ala17–Thr24, Asp81–His85, and Asn135–Asp138.

The protein belongs to the TRAFAC class translation factor GTPase superfamily. Classic translation factor GTPase family. EF-G/EF-2 subfamily.

It localises to the cytoplasm. In terms of biological role, catalyzes the GTP-dependent ribosomal translocation step during translation elongation. During this step, the ribosome changes from the pre-translocational (PRE) to the post-translocational (POST) state as the newly formed A-site-bound peptidyl-tRNA and P-site-bound deacylated tRNA move to the P and E sites, respectively. Catalyzes the coordinated movement of the two tRNA molecules, the mRNA and conformational changes in the ribosome. The polypeptide is Elongation factor G (Anoxybacillus flavithermus (strain DSM 21510 / WK1)).